We begin with the raw amino-acid sequence, 297 residues long: Acetyl-coenzyme A carboxylase carboxyl transferase subunit beta (297 aa).

Residues 1 to 23 (MSWIERILGRTSSSSSSSKSKVP) form a disordered region. The CoA carboxyltransferase N-terminal domain occupies 26 to 295 (VWTKCTSCEQ…PFKTAELIVE (270 aa)). Residues cysteine 30, cysteine 33, cysteine 49, and cysteine 52 each contribute to the Zn(2+) site. The C4-type zinc finger occupies 30–52 (CTSCEQVLYSEELKRNMHVCPKC).

Belongs to the AccD/PCCB family. Acetyl-CoA carboxylase is a heterohexamer composed of biotin carboxyl carrier protein (AccB), biotin carboxylase (AccC) and two subunits each of ACCase subunit alpha (AccA) and ACCase subunit beta (AccD). Requires Zn(2+) as cofactor.

It is found in the cytoplasm. The enzyme catalyses N(6)-carboxybiotinyl-L-lysyl-[protein] + acetyl-CoA = N(6)-biotinyl-L-lysyl-[protein] + malonyl-CoA. The protein operates within lipid metabolism; malonyl-CoA biosynthesis; malonyl-CoA from acetyl-CoA: step 1/1. Component of the acetyl coenzyme A carboxylase (ACC) complex. Biotin carboxylase (BC) catalyzes the carboxylation of biotin on its carrier protein (BCCP) and then the CO(2) group is transferred by the transcarboxylase to acetyl-CoA to form malonyl-CoA. In Actinobacillus pleuropneumoniae serotype 7 (strain AP76), this protein is Acetyl-coenzyme A carboxylase carboxyl transferase subunit beta.